The chain runs to 264 residues: Proteasome assembly chaperone 2 (264 aa).

Thr-137 carries the post-translational modification Phosphothreonine.

Belongs to the PSMG2 family. Forms a heterodimer with PSMG1. The PSMG1-PSMG2 heterodimer interacts directly with the PSMA5 and PSMA7 proteasome alpha subunits. Post-translationally, degraded by the proteasome upon completion of 20S proteasome maturation.

It localises to the nucleus. Chaperone protein which promotes assembly of the 20S proteasome as part of a heterodimer with PSMG1. The PSMG1-PSMG2 heterodimer binds to the PSMA5 and PSMA7 proteasome subunits, promotes assembly of the proteasome alpha subunits into the heteroheptameric alpha ring and prevents alpha ring dimerization. The polypeptide is Proteasome assembly chaperone 2 (Bos taurus (Bovine)).